The chain runs to 705 residues: Probable cyclic nucleotide-gated ion channel 16 (705 aa).

Residues 1 to 57 (MSNLHLYTSARFRNFPTTFSLRHHHNDPNNQRRRSIFSKLRDKTLDPGGDLITRWNH) lie on the Cytoplasmic side of the membrane. A helical membrane pass occupies residues 58-78 (IFLITCLLALFLDPLYFYLPI). Residues 79 to 91 (VQAGTACMSIDVR) lie on the Extracellular side of the membrane. A helical transmembrane segment spans residues 92–112 (FGIFVTCFRNLADLSFLIHIL). At 113–147 (LKFKTAFVSKSSRVFGRGELVMDRREIAIRYLKSE) the chain is on the cytoplasmic side. Residues 148-168 (FVIDLAATLPLPQIMIWFVIP) form a helical membrane-spanning segment. Over 169–180 (NAGEFRYAAHQN) the chain is Extracellular. Residues 181-201 (HTLSLIVLIQYVPRFLVMLPL) traverse the membrane as a helical segment. The Cytoplasmic segment spans residues 202-222 (NRRIIKATGVAAKTAWSGAAY). A helical membrane pass occupies residues 223–243 (NLILYLLVSHVLGSVWYVLSI). Over 244-353 (QRQHECWRRE…LAASTLSSET (110 aa)) the chain is Extracellular. The helical transmembrane segment at 354–374 (IFSCFICVAGLVFFSHLIGNV) threads the bilayer. Residues 375-705 (QNYLQSTTAR…MFKPEDPGFF (331 aa)) lie on the Cytoplasmic side of the membrane. A nucleoside 3',5'-cyclic phosphate contacts are provided by residues 457–580 (FFAQ…HSKK) and glutamate 528. Positions 573-588 (FRRLHSKKLQHAFRYY) are calmodulin-binding. In terms of domain architecture, IQ spans 593–622 (RAWGTCFIQAAWRRYMKRKLAMELARQEEE). 2 disordered regions span residues 636–655 (EEDM…SNNQ) and 672–705 (RGVL…PGFF). The span at 642-655 (SNNNNGDENSSNNQ) shows a compositional bias: low complexity.

It belongs to the cyclic nucleotide-gated cation channel (TC 1.A.1.5) family. As to quaternary structure, homotetramer or heterotetramer.

It is found in the cell membrane. Its function is as follows. Putative cyclic nucleotide-gated ion channel. The chain is Probable cyclic nucleotide-gated ion channel 16 (CNGC16) from Arabidopsis thaliana (Mouse-ear cress).